Reading from the N-terminus, the 125-residue chain is SKP1-like protein 7 (125 aa).

Residues 94–125 (MNAAYDLHIKSLLALAYQTVADMVNDNKWAFE) are interaction with the F-box domain of F-box proteins.

The protein belongs to the SKP1 family. Part of a SCF (SKP1-cullin-F-box) protein ligase complex. Restricted to siliques.

It is found in the nucleus. It participates in protein modification; protein ubiquitination. Involved in ubiquitination and subsequent proteasomal degradation of target proteins. Together with CUL1, RBX1 and a F-box protein, it forms a SCF E3 ubiquitin ligase complex. The functional specificity of this complex depends on the type of F-box protein. In the SCF complex, it serves as an adapter that links the F-box protein to CUL1. In Arabidopsis thaliana (Mouse-ear cress), this protein is SKP1-like protein 7 (ASK7).